Consider the following 70-residue polypeptide: uncharacterized protein (70 aa).

This is an uncharacterized protein from Escherichia coli (strain K12).